We begin with the raw amino-acid sequence, 369 residues long: Developmentally-regulated G-protein 3 (369 aa).

Residues 66–291 (SRVGLVGFPS…LLDKIWEYLD (226 aa)) form the OBG-type G domain. Residues 72-79 (GFPSVGKS), 118-122 (DLPGI), and 249-252 (NKID) contribute to the GTP site. The TGS domain occupies 291-367 (DLTRIYTKPK…EDEDVVQIVK (77 aa)).

This sequence belongs to the TRAFAC class OBG-HflX-like GTPase superfamily. OBG GTPase family.

In terms of biological role, binds GDP and GTP, and has low GTPase activity in vitro. This is Developmentally-regulated G-protein 3 (DRG3) from Arabidopsis thaliana (Mouse-ear cress).